We begin with the raw amino-acid sequence, 335 residues long: Zinc-type alcohol dehydrogenase-like protein SAS2087 (335 aa).

This sequence belongs to the zinc-containing alcohol dehydrogenase family. Quinone oxidoreductase subfamily.

The sequence is that of Zinc-type alcohol dehydrogenase-like protein SAS2087 from Staphylococcus aureus (strain MSSA476).